Reading from the N-terminus, the 172-residue chain is Protein-export protein SecB (172 aa).

This sequence belongs to the SecB family. As to quaternary structure, homotetramer, a dimer of dimers. One homotetramer interacts with 1 SecA dimer.

It is found in the cytoplasm. Functionally, one of the proteins required for the normal export of preproteins out of the cell cytoplasm. It is a molecular chaperone that binds to a subset of precursor proteins, maintaining them in a translocation-competent state. It also specifically binds to its receptor SecA. The sequence is that of Protein-export protein SecB from Cupriavidus pinatubonensis (strain JMP 134 / LMG 1197) (Cupriavidus necator (strain JMP 134)).